The sequence spans 1239 residues: Anion exchange protein 2 (1239 aa).

Residues 1-237 are disordered; that stretch reads MSSAPRRPAK…HRSYNLQERR (237 aa). At 1 to 706 the chain is on the cytoplasmic side; the sequence is MSSAPRRPAK…DFRDALDPQC (706 aa). 2 stretches are compositionally biased toward basic and acidic residues: residues 37-49 and 58-75; these read ELHR…RFEE and GGEE…EYHR. Composition is skewed to basic residues over residues 76–85 and 94–110; these read QSSHHIHHPL and RRRK…RRRP. Phosphoserine is present on residues S113, S132, S144, S170, and S172. Residues 120–133 show a composition bias toward acidic residues; sequence TIEEGEEDEDEASE. Positions 141–155 are enriched in low complexity; the sequence is TQPSPVSTPSSVQFF. The span at 189 to 207 shows a compositional bias: low complexity; that stretch reads GAQAGTQVEEAEAVAVASG. Residues 208-217 show a composition bias toward gly residues; the sequence is TAGGDDGGAS. The residue at position 241 (S241) is a Phosphoserine. T255 is subject to Phosphothreonine. Residue K272 is modified to N6-methyllysine. The tract at residues 285 to 318 is disordered; that stretch reads HLVRKNAKGSTQSGREGREPGPTPRARPRAPHKP. S441 is subject to Phosphoserine. Positions 447 to 468 are disordered; it reads SLLGHHHGQGAESDPHVTEPLI. 2 membrane (anion exchange) regions span residues 706–1239 and 708–1239; these read CLAA…PMPV and AAVI…PMPV. A run of 4 helical transmembrane segments spans residues 707-727, 752-772, 794-814, and 824-844; these read LAAV…FGGL, FCLL…LLVF, IGFW…SFLV, and IFAF…LVKI. At 845 to 895 the chain is on the extracellular side; that stretch reads FQEHPLHGCSASNSSEVDGGENMTWAVARPTLGPGNRSLAGQSGQGKPRGQ. Residues N857, N866, and N880 are each glycosylated (N-linked (GlcNAc...) asparagine). A helical membrane pass occupies residues 896–916; the sequence is PNTALLSLVLMAGTFFIAFFL. Residues 917–931 are Cytoplasmic-facing; the sequence is RKFKNSRFFPGRIRR. The next 5 helical transmembrane spans lie at 932 to 952, 987 to 1007, 1034 to 1054, 1088 to 1108, and 1111 to 1131; these read VIGD…DYSI, FPVW…ILIF, LLLI…WLAA, RVTG…GDLL, and IPLA…LNGI. Residue C1171 is the site of S-palmitoyl cysteine attachment. The helical transmembrane segment at 1172–1192 threads the bilayer; that stretch reads LALLWAVMSTAASLAFPFILI.

It belongs to the anion exchanger (TC 2.A.31) family.

The protein localises to the apical cell membrane. The protein resides in the basolateral cell membrane. It catalyses the reaction hydrogencarbonate(in) + chloride(out) = hydrogencarbonate(out) + chloride(in). Sodium-independent anion exchanger which mediates the electroneutral exchange of chloride for bicarbonate ions across the cell membrane. Plays an important role in osteoclast differentiation and function. Regulates bone resorption and calpain-dependent actin cytoskeleton organization in osteoclasts via anion exchange-dependent control of pH. Essential for intracellular pH regulation in CD8(+) T-cells upon CD3 stimulation, modulating CD8(+) T-cell response. In Pongo abelii (Sumatran orangutan), this protein is Anion exchange protein 2 (SLC4A2).